An 89-amino-acid chain; its full sequence is DNA/RNA-binding protein Alba (89 aa).

The protein belongs to the histone-like Alba family.

The protein localises to the cytoplasm. Its subcellular location is the chromosome. Binds double-stranded DNA tightly but without sequence specificity. Involved in DNA compaction. The polypeptide is DNA/RNA-binding protein Alba (Methanococcus maripaludis (strain DSM 14266 / JCM 13030 / NBRC 101832 / S2 / LL)).